We begin with the raw amino-acid sequence, 460 residues long: Photosystem II CP43 reaction center protein (460 aa).

Met-1 is a propeptide. A run of 5 helical transmembrane segments spans residues 56–80 (LFET…PHLA), 121–142 (IVGP…RDKN), 165–187 (KALF…RFIT), 242–262 (RPFS…LSYS), and 278–299 (WYNN…ASQA). Glu-354 is a [CaMn4O5] cluster binding site. Residues 434-458 (RARAAAAGFEKGINRENEPVLSMRP) traverse the membrane as a helical segment.

The protein belongs to the PsbB/PsbC family. PsbC subfamily. As to quaternary structure, PSII is composed of 1 copy each of membrane proteins PsbA, PsbB, PsbC, PsbD, PsbE, PsbF, PsbH, PsbI, PsbJ, PsbK, PsbL, PsbM, PsbT, PsbY, PsbZ, Psb30/Ycf12, at least 3 peripheral proteins of the oxygen-evolving complex and a large number of cofactors. It forms dimeric complexes. Binds multiple chlorophylls and provides some of the ligands for the Ca-4Mn-5O cluster of the oxygen-evolving complex. It may also provide a ligand for a Cl- that is required for oxygen evolution. PSII binds additional chlorophylls, carotenoids and specific lipids. is required as a cofactor.

The protein localises to the plastid. It localises to the chloroplast thylakoid membrane. In terms of biological role, one of the components of the core complex of photosystem II (PSII). It binds chlorophyll and helps catalyze the primary light-induced photochemical processes of PSII. PSII is a light-driven water:plastoquinone oxidoreductase, using light energy to abstract electrons from H(2)O, generating O(2) and a proton gradient subsequently used for ATP formation. The protein is Photosystem II CP43 reaction center protein of Cyanidium caldarium (Red alga).